A 79-amino-acid polypeptide reads, in one-letter code: MKLTCMMLVAVLFLTAWTFVTANVSRNGLENLFPEERHEMMNPEAAKLNNRDCVKAGTACGFPKPEPACCSSWCIFVCT.

Positions 1-22 (MKLTCMMLVAVLFLTAWTFVTA) are cleaved as a signal peptide. A propeptide spanning residues 23-51 (NVSRNGLENLFPEERHEMMNPEAAKLNNR) is cleaved from the precursor. 3 disulfide bridges follow: Cys-53-Cys-70, Cys-60-Cys-74, and Cys-69-Cys-78.

This sequence belongs to the conotoxin O1 superfamily. As to expression, expressed by the venom duct.

It localises to the secreted. In Conus leopardus (Leopard cone), this protein is Conotoxin Leo-O1.